The sequence spans 279 residues: MLFIELLKAIFFGVIEGVTEWLPISSTGHLILVQEFIRLHQDKAFMEMFNIVIQLGAIIAVIVIYFERLNPFQPGKSPQQIRLTWQLWLKVAIACIPSIIIAVPLDDWFEAHFNHMLPIAIALIVYGVAFLWIEKRHQTLEPRVVKLSRMSYKTAFFIGCFQVLSIIPGTSRSGATILGAIILGASRTVAADFTFFLAIPTMFGYSGLKALKFFIDGNHLTLSQLLVLLVASLTAFAVSLYVIKLLTDYVKKHDFTVFGRYRIVLGSLLIVYSVFKSLF.

Helical transmembrane passes span 2-22, 44-64, 85-105, 113-133, 163-183, 188-208, 225-245, and 255-275; these read LFIE…TEWL, AFME…VIVI, WQLW…AVPL, FNHM…FLWI, VLSI…AIIL, TVAA…YSGL, LLVL…VIKL, and FTVF…YSVF.

The protein belongs to the UppP family.

It is found in the cell membrane. It carries out the reaction di-trans,octa-cis-undecaprenyl diphosphate + H2O = di-trans,octa-cis-undecaprenyl phosphate + phosphate + H(+). In terms of biological role, catalyzes the dephosphorylation of undecaprenyl diphosphate (UPP). Confers resistance to bacitracin. This Streptococcus equi subsp. zooepidemicus (strain H70) protein is Undecaprenyl-diphosphatase.